A 288-amino-acid polypeptide reads, in one-letter code: MAAGKEIRGKIKSVENTKKITKAMEMVAASKMRKAQDRMRAARPYSEKIRNIAANLGQANPEYVHPFMKSNDAKTAGFIVVTTDKGLCGGMNTNVLRAVTAKLRELQSQGVSTQAVAIGNKGLGFLNRIGAQVVSHATGLGDTPHLDKLIGPVKVLLDAYAEGKINGVYLAYTKFINTMKQESVVEQLLPLSSEKMQAEKTEHGWDYIYEPDAQSVIDDLLVRYVESLIYQAVAENMASEQSARMVAMKAATDNAGNVIGELKLVYNKTRQAAITKELSEIVAGAAAV.

The protein belongs to the ATPase gamma chain family. F-type ATPases have 2 components, CF(1) - the catalytic core - and CF(0) - the membrane proton channel. CF(1) has five subunits: alpha(3), beta(3), gamma(1), delta(1), epsilon(1). CF(0) has three main subunits: a, b and c.

The protein resides in the cell inner membrane. In terms of biological role, produces ATP from ADP in the presence of a proton gradient across the membrane. The gamma chain is believed to be important in regulating ATPase activity and the flow of protons through the CF(0) complex. The sequence is that of ATP synthase gamma chain from Paracidovorax citrulli (strain AAC00-1) (Acidovorax citrulli).